The following is a 225-amino-acid chain: Large ribosomal subunit protein uL1 (225 aa).

The protein belongs to the universal ribosomal protein uL1 family. As to quaternary structure, part of the 50S ribosomal subunit.

Binds directly to 23S rRNA. Probably involved in E site tRNA release. Functionally, protein L1 is also a translational repressor protein, it controls the translation of its operon by binding to its mRNA. This chain is Large ribosomal subunit protein uL1, found in Thermofilum pendens (strain DSM 2475 / Hrk 5).